The chain runs to 1349 residues: Serine-aspartate repeat-containing protein D (1349 aa).

The first 35 residues, 1-35 (MLNRENKTAITRKGMVSNRLNKFSIRKYTVGTASI), serve as a signal peptide directing secretion. Positions 23–34 (FSIRKYTVGTAS) match the YSIRK-G/S signaling motif motif. The ligand binding A region stretch occupies residues 36 to 568 (LVGTTLIFGL…NNQSGGAGQE (533 aa)). A disordered region spans residues 54–185 (ESTNKELNEA…NKKVDAKTES (132 aa)). 2 stretches are compositionally biased toward polar residues: residues 62–71 (EATTSASDNQ) and 94–108 (EMVSSQGNETTSNGN). Basic and acidic residues predominate over residues 130-145 (KSDEQASPKSTNEDLN). 2 stretches are compositionally biased toward polar residues: residues 146–155 (TKQTISNQEA) and 163–173 (NKSVVNVQPTN). A compositionally biased stretch (basic and acidic residues) spans 174-183 (EENKKVDAKT). CNA-B domains are found at residues 569 to 680 (VYKI…IYKP), 681 to 791 (KYNL…YKTP), 792 to 901 (KYNL…FYKP), 902 to 1012 (TYNL…YKTP), and 1013 to 1123 (KYSL…EEDT). Disordered stretches follow at residues 856-883 (FETPSGYTPTQVGSGTDEGIDSNGTSTT), 972-992 (YTPTSVTSGNDTEKDSNGLTT), and 1081-1325 (AGLT…SNNA). 2 stretches are compositionally biased toward polar residues: residues 860–869 (SGYTPTQVGS) and 972–981 (YTPTSVTSGN). 2 stretches are compositionally biased toward acidic residues: residues 1091 to 1101 (TEDDKDADGGE) and 1118 to 1288 (YFEE…DSDS). An LPXTG sorting signal motif is present at residues 1312–1316 (LPETG). Thr-1315 bears the Pentaglycyl murein peptidoglycan amidated threonine mark. Residues 1316–1349 (GSENNGSNNATLFGGLFAALGSLLLFGRRKKQNK) constitute a propeptide, removed by sortase.

It belongs to the serine-aspartate repeat-containing protein (SDr) family. Interacts with host DSG1; this interaction increases S.aureus adherence to keratinocytes.

It localises to the secreted. It is found in the cell wall. Its function is as follows. Cell surface-associated calcium-binding protein which plays an important role in adhesion and pathogenesis. Mediates interactions with components of the extracellular matrix such as host DSG1 to promote bacterial adhesion to host cells. Contributes to the resistance to killing by innate immune components such as neutrophils present in blood and thus attenuates bacterial clearance. The sequence is that of Serine-aspartate repeat-containing protein D (sdrD) from Staphylococcus aureus (strain NCTC 8325 / PS 47).